The following is a 379-amino-acid chain: Guanine nucleotide-binding protein G(s) subunit alpha (379 aa).

The 342-residue stretch at 38 to 379 (STHRLLLLGA…RMHLRQYELL (342 aa)) folds into the G-alpha domain. A G1 motif region spans residues 41-54 (RLLLLGAGESGKST). GTP is bound by residues 46–53 (GAGESGKS), 182–188 (LRCRVLT), 207–211 (DVGGQ), 276–279 (NKQD), and A351. S53 and T188 together coordinate Mg(2+). Residues 180–188 (DILRCRVLT) are G2 motif. A G3 motif region spans residues 203 to 212 (FHMFDVGGQR). The interval 272–279 (ILFLNKQD) is G4 motif. The tract at residues 349-354 (TCAVDT) is G5 motif.

It belongs to the G-alpha family. G(s) subfamily. In terms of assembly, g proteins are composed of 3 units; alpha, beta and gamma. The alpha chain contains the guanine nucleotide binding site.

In terms of biological role, guanine nucleotide-binding proteins (G proteins) are involved as modulators or transducers in various transmembrane signaling systems. The G(s) protein is involved in hormonal regulation of adenylate cyclase: it activates the cyclase in response to beta-adrenergic stimuli. The sequence is that of Guanine nucleotide-binding protein G(s) subunit alpha from Schistosoma mansoni (Blood fluke).